Reading from the N-terminus, the 577-residue chain is Proline--tRNA ligase (577 aa).

Belongs to the class-II aminoacyl-tRNA synthetase family. ProS type 1 subfamily. Homodimer.

The protein resides in the cytoplasm. The catalysed reaction is tRNA(Pro) + L-proline + ATP = L-prolyl-tRNA(Pro) + AMP + diphosphate. Catalyzes the attachment of proline to tRNA(Pro) in a two-step reaction: proline is first activated by ATP to form Pro-AMP and then transferred to the acceptor end of tRNA(Pro). As ProRS can inadvertently accommodate and process non-cognate amino acids such as alanine and cysteine, to avoid such errors it has two additional distinct editing activities against alanine. One activity is designated as 'pretransfer' editing and involves the tRNA(Pro)-independent hydrolysis of activated Ala-AMP. The other activity is designated 'posttransfer' editing and involves deacylation of mischarged Ala-tRNA(Pro). The misacylated Cys-tRNA(Pro) is not edited by ProRS. The protein is Proline--tRNA ligase of Limosilactobacillus reuteri (strain DSM 20016) (Lactobacillus reuteri).